A 357-amino-acid chain; its full sequence is Cinnamyl alcohol dehydrogenase 5 (357 aa).

Cysteine 47 provides a ligand contact to Zn(2+). An NADP(+)-binding site is contributed by threonine 49. 7 residues coordinate Zn(2+): histidine 69, glutamate 70, cysteine 100, cysteine 103, cysteine 106, cysteine 114, and cysteine 163. Residues threonine 167, 188 to 193 (GLGGVG), 211 to 216 (SSSNKK), threonine 251, glycine 275, and 298 to 300 (SFI) each bind NADP(+).

This sequence belongs to the zinc-containing alcohol dehydrogenase family. In terms of assembly, homodimer. Requires Zn(2+) as cofactor. Expressed at the lateral root initiation sites, in the vascular tissues of the primary lateral root and the root caps. Expressed in the hypocotyl, cotyledon and leaf veins, apical meristem region, at the base of the trichomes, hydathodes and cauline leaves. In stems, expressed in the cells associated with the vascular cambium, interfascicular cambium and the developing xylem. Expressed in the vascular strand of petals and sepals, anthers, stamen filaments, stigma in flowers, and abscission, style and stigmatic regions of siliques.

The catalysed reaction is (E)-cinnamyl alcohol + NADP(+) = (E)-cinnamaldehyde + NADPH + H(+). It catalyses the reaction (E)-coniferol + NADP(+) = (E)-coniferaldehyde + NADPH + H(+). It carries out the reaction (E)-sinapyl alcohol + NADP(+) = (E)-sinapaldehyde + NADPH + H(+). The enzyme catalyses (E)-4-coumaroyl alcohol + NADP(+) = (E)-4-coumaraldehyde + NADPH + H(+). The catalysed reaction is (E)-caffeyl alcohol + NADP(+) = (E)-caffeyl aldehyde + NADPH + H(+). It functions in the pathway aromatic compound metabolism; phenylpropanoid biosynthesis. Functionally, involved in lignin biosynthesis in the floral stem. Catalyzes the final step specific for the production of lignin monomers. Catalyzes the NADPH-dependent reduction of coniferaldehyde, 5-hydroxyconiferaldehyde, sinapaldehyde, 4-coumaraldehyde and caffeyl aldehyde to their respective alcohols. The chain is Cinnamyl alcohol dehydrogenase 5 from Arabidopsis thaliana (Mouse-ear cress).